The primary structure comprises 434 residues: Trigger factor (434 aa).

Residues 161 to 246 (GKRVSIDFVG…VNKVEARELP (86 aa)) enclose the PPIase FKBP-type domain.

Belongs to the FKBP-type PPIase family. Tig subfamily.

It localises to the cytoplasm. It catalyses the reaction [protein]-peptidylproline (omega=180) = [protein]-peptidylproline (omega=0). Functionally, involved in protein export. Acts as a chaperone by maintaining the newly synthesized protein in an open conformation. Functions as a peptidyl-prolyl cis-trans isomerase. The chain is Trigger factor from Vibrio parahaemolyticus serotype O3:K6 (strain RIMD 2210633).